The chain runs to 360 residues: Peptide chain release factor 1 (360 aa).

Q235 is modified (N5-methylglutamine).

This sequence belongs to the prokaryotic/mitochondrial release factor family. Post-translationally, methylated by PrmC. Methylation increases the termination efficiency of RF1.

It is found in the cytoplasm. In terms of biological role, peptide chain release factor 1 directs the termination of translation in response to the peptide chain termination codons UAG and UAA. In Burkholderia vietnamiensis (strain G4 / LMG 22486) (Burkholderia cepacia (strain R1808)), this protein is Peptide chain release factor 1.